We begin with the raw amino-acid sequence, 415 residues long: Serine hydroxymethyltransferase (415 aa).

(6S)-5,6,7,8-tetrahydrofolate-binding positions include Leu-119 and 123–125 (GHL). Lys-228 is subject to N6-(pyridoxal phosphate)lysine. 353-355 (SAF) lines the (6S)-5,6,7,8-tetrahydrofolate pocket.

This sequence belongs to the SHMT family. As to quaternary structure, homodimer. It depends on pyridoxal 5'-phosphate as a cofactor.

The protein localises to the cytoplasm. It carries out the reaction (6R)-5,10-methylene-5,6,7,8-tetrahydrofolate + glycine + H2O = (6S)-5,6,7,8-tetrahydrofolate + L-serine. It functions in the pathway one-carbon metabolism; tetrahydrofolate interconversion. The protein operates within amino-acid biosynthesis; glycine biosynthesis; glycine from L-serine: step 1/1. Catalyzes the reversible interconversion of serine and glycine with tetrahydrofolate (THF) serving as the one-carbon carrier. Also exhibits THF-independent aldolase activity toward beta-hydroxyamino acids, producing glycine and aldehydes, via a retro-aldol mechanism. This is Serine hydroxymethyltransferase from Haloarcula marismortui (strain ATCC 43049 / DSM 3752 / JCM 8966 / VKM B-1809) (Halobacterium marismortui).